A 317-amino-acid polypeptide reads, in one-letter code: Endochitinase 3 (317 aa).

The N-terminal stretch at 1 to 19 (MFVRNALVVTGLLAALTQA) is a signal peptide. 3 N-linked (GlcNAc...) asparagine glycosylation sites follow: asparagine 25, asparagine 49, and asparagine 169. Positions 29–317 (HKLTVYWGAE…NYQKEIKANL (289 aa)) constitute a GH18 domain. Glutamate 170 functions as the Proton donor in the catalytic mechanism. An N-linked (GlcNAc...) asparagine glycan is attached at asparagine 245.

Belongs to the glycosyl hydrolase 18 family. Chitinase class III subfamily.

The protein localises to the secreted. The catalysed reaction is Random endo-hydrolysis of N-acetyl-beta-D-glucosaminide (1-&gt;4)-beta-linkages in chitin and chitodextrins.. Functionally, secreted chitinase involved in the degradation of chitin, a component of the cell walls of fungi and exoskeletal elements of some animals (including worms and arthropods). Participates in the infection process and directly acts in the penetration process of the host cuticle. Involved in heat-shock adaptation. This chain is Endochitinase 3 (chi3), found in Metarhizium robertsii (strain ARSEF 23 / ATCC MYA-3075) (Metarhizium anisopliae (strain ARSEF 23)).